The following is a 243-amino-acid chain: tRNA (guanine-N(1)-)-methyltransferase (243 aa).

Residues Gly-123 and 143–148 contribute to the S-adenosyl-L-methionine site; that span reads LGDFVM.

The protein belongs to the RNA methyltransferase TrmD family. In terms of assembly, homodimer.

The protein localises to the cytoplasm. It catalyses the reaction guanosine(37) in tRNA + S-adenosyl-L-methionine = N(1)-methylguanosine(37) in tRNA + S-adenosyl-L-homocysteine + H(+). Its function is as follows. Specifically methylates guanosine-37 in various tRNAs. This chain is tRNA (guanine-N(1)-)-methyltransferase, found in Ruegeria pomeroyi (strain ATCC 700808 / DSM 15171 / DSS-3) (Silicibacter pomeroyi).